We begin with the raw amino-acid sequence, 320 residues long: tRNA (guanine(10)-N2)-dimethyltransferase (320 aa).

The 91-residue stretch at 46-136 (EKFFERLAYT…DDKCYVGLLE (91 aa)) folds into the THUMP domain.

The protein belongs to the methyltransferase superfamily. Trm-G10 family. Monomer.

It is found in the cytoplasm. It catalyses the reaction guanosine(10) in tRNA + 2 S-adenosyl-L-methionine = N(2)-dimethylguanosine(10) in tRNA + 2 S-adenosyl-L-homocysteine + 2 H(+). Functionally, catalyzes the adenosylmethionine-dependent methylation of the exocyclic amino group (N(2)) of guanosine at position 10 of various tRNAs. Acts via a two-step process that leads to the formation of either N(2)-monomethyl (m(2)G) or N(2)-dimethylguanosine (m(2)(2)G). The protein is tRNA (guanine(10)-N2)-dimethyltransferase (trmG10) of Archaeoglobus fulgidus (strain ATCC 49558 / DSM 4304 / JCM 9628 / NBRC 100126 / VC-16).